Here is a 1875-residue protein sequence, read N- to C-terminus: Nonribosomal peptide synthetase otaB (1875 aa).

An adenylation 1 region spans residues 202 to 590 (GQVRENGDRA…SIRFAGRRQA (389 aa)). Residues 724 to 800 (SPMTAAERVM…DLVAHIKDAG (77 aa)) form the Carrier domain. Ser-761 is subject to O-(pantetheine 4'-phosphoryl)serine. The interval 836–1245 (EDVYPCTTLQ…LVSPLDEERL (410 aa)) is condensation. Positions 1264-1659 (QKQSYAQPQA…ARKDTQVKIR (396 aa)) are adenylation 2.

It belongs to the NRP synthetase family.

The catalysed reaction is 7-carboxymellein + L-phenylalanine + ATP = ochratoxin B + ADP + phosphate + H(+). Its pathway is mycotoxin biosynthesis. Its function is as follows. Nonribosomal peptide synthetase; part of the gene cluster that mediates the biosynthesis of ochratoxin A (OTA), a mycotoxin composed of a chlorinated type I polyketide dihydroisocoumarin moiety linked to L-phenylalanine, and demonstrated to have nephrotoxic, immunotoxic, genotoxic, neurotoxic, and teratogenic properties. OtaB is responsible for the linking of phenylalanine to the dihydroisocoumarin ring. The pathway begins with the highly reducing polyketide synthase otaA that catalyzes the formation of the isocoumarin group during the initial stages of biosynthesis, starting from one acetate and 4 malonate units, to originate the characteristic pentaketide skeleton 7-methylmellein (7-MM) of the OTA molecule. The newly identified cyclase otaY might be involved in the polyketide cyclization reaction during the initial steps of the OTA biosynthesis. 7-MM is then oxidized into 7-carboxymellein (also called ochratoxin beta) by the cytochrome P450 monooxygenase otaC. The NRPS encoded by the otaB gene is involved in the linking of phenylalanine to the dihydroisocoumarin ring. The reaction catalyzed by NRPS results in the production of ochratoxin B (OTB), which is the non-chlorinated analog of OTA and which subsequently serves as the substrate of the halogenase otaD for chlorination activity to form the final molecular structure of OTA, containing a chlorine atom in the C-5 position of the molecule. The polypeptide is Nonribosomal peptide synthetase otaB (Aspergillus carbonarius (strain ITEM 5010)).